A 114-amino-acid chain; its full sequence is UPF0102 protein HPSH_02690 (114 aa).

The protein belongs to the UPF0102 family.

This Helicobacter pylori (strain Shi470) protein is UPF0102 protein HPSH_02690.